The following is a 1210-amino-acid chain: ATPase family AAA domain-containing protein At1g05910 (1210 aa).

The span at 1–11 (MHPKRSSQGDG) shows a compositional bias: polar residues. Disordered stretches follow at residues 1 to 32 (MHPK…LHGR) and 63 to 291 (LHKG…RTDD). Positions 97 to 109 (DYTDSSGAEDEDM) are enriched in acidic residues. The segment covering 130–146 (SRKDMDAELAPRREGLR) has biased composition (basic and acidic residues). A compositionally biased stretch (acidic residues) spans 167-226 (DTSEEKDGQDETENGNELDDADDGENEVEAEDEGNGEDEGDGEDEGEEDGDDDEEGDEEQ). Residues 227–244 (EGRKRYDLRNRAEVRRMP) show a composition bias toward basic and acidic residues. A compositionally biased stretch (basic residues) spans 276–286 (GGSRPHKRHRF). 422–429 (GPPGTGKT) provides a ligand contact to ATP. The segment at 856-883 (LNGKPDGPQPLPELPKVPKEPTGPKPAE) is disordered. Positions 897–1000 (RLRMCLRDVC…DVVHGMLSQM (104 aa)) constitute a Bromo domain. The span at 1057–1070 (DRDYEGLKKPKKTT) shows a compositional bias: basic and acidic residues. Positions 1057–1151 (DRDYEGLKKP…EISSRTESVK (95 aa)) are disordered. A compositionally biased stretch (polar residues) spans 1080-1090 (DKSQNQDSGQE). Composition is skewed to basic and acidic residues over residues 1108-1123 (DGDR…KEAS) and 1138-1151 (KSDK…ESVK).

It belongs to the AAA ATPase family.

The chain is ATPase family AAA domain-containing protein At1g05910 from Arabidopsis thaliana (Mouse-ear cress).